The sequence spans 184 residues: MRVISGSKKGRSLKAVAGTSTRPTTDKVKESIFNMIGPYFDGGRGLDLFAGSGGLGIEALSRGFEHCIFVDRDFKAIQTVKSNLKTLELTKHAQVYRNDAERALHAAAKRETGFRGIFLDPPYKEQKLKALLTLIDEYQMLEEDGFIVAEHDREVELPETVGDLVMTRKETYGLTGVAIYKKRG.

The segment at 1–22 is disordered; it reads MRVISGSKKGRSLKAVAGTSTR.

The protein belongs to the methyltransferase superfamily. RsmD family.

May catalyze the S-adenosyl-L-methionine-dependent methylation of a specific base in rRNA. The sequence is that of Putative rRNA methyltransferase YlbH (ylbH) from Bacillus subtilis (strain 168).